The primary structure comprises 587 residues: 5-aminolevulinate synthase, erythroid-specific, mitochondrial (587 aa).

The transit peptide at 1–49 (MVTAAMLLQCCPVLARGPTSLLGKVVKTHQFLFGIGRCPILATQGPNCS) directs the protein to the mitochondrion. Residue arginine 163 participates in succinyl-CoA binding. Residues cysteine 258 and phenylalanine 259 each contribute to the pyridoxal 5'-phosphate site. Serine 280 and lysine 299 together coordinate succinyl-CoA. The pyridoxal 5'-phosphate site is built by serine 332, histidine 360, and threonine 388. Residue lysine 391 is part of the active site. The residue at position 391 (lysine 391) is an N6-(pyridoxal phosphate)lysine. Residues threonine 420 and threonine 421 each coordinate pyridoxal 5'-phosphate. Threonine 508 is a succinyl-CoA binding site.

Belongs to the class-II pyridoxal-phosphate-dependent aminotransferase family. Homodimer. Interacts with SUCLA2. In terms of assembly, interacts with SUCLA2. The cofactor is pyridoxal 5'-phosphate. Erythroid-specific.

It localises to the mitochondrion inner membrane. The enzyme catalyses succinyl-CoA + glycine + H(+) = 5-aminolevulinate + CO2 + CoA. The protein operates within porphyrin-containing compound metabolism; protoporphyrin-IX biosynthesis; 5-aminolevulinate from glycine: step 1/1. Its activity is regulated as follows. Down-regulated by itaconyl-CoA which acts as a competitive inhibitor of succinyl-CoA substrate. Catalyzes the pyridoxal 5'-phosphate (PLP)-dependent condensation of succinyl-CoA and glycine to form aminolevulinic acid (ALA), with CoA and CO2 as by-products. Contributes significantly to heme formation during erythropoiesis. In terms of biological role, catalyzes the pyridoxal 5'-phosphate (PLP)-dependent condensation of succinyl-CoA and glycine to form aminolevulinic acid (ALA), with CoA and CO2 as by-products. Catalytic activity is 75-85% of isoform 1 activity. Its function is as follows. Catalyzes the pyridoxal 5'-phosphate (PLP)-dependent condensation of succinyl-CoA and glycine to form aminolevulinic acid (ALA), with CoA and CO2 as by-products. Catalytic activity is 65-75% of isoform 1 activity. In Homo sapiens (Human), this protein is 5-aminolevulinate synthase, erythroid-specific, mitochondrial.